The primary structure comprises 917 residues: GTPase-activating Rap/Ran-GAP domain-like protein 3 (917 aa).

Residues 185-401 (LLVLEEQEGS…RTLDMLIRSL (217 aa)) form the Rap-GAP domain. A CNH domain is found at 483–792 (PHEVVCADSW…QLVASRSDIY (310 aa)).

Belongs to the GARNL3 family.

The polypeptide is GTPase-activating Rap/Ran-GAP domain-like protein 3 (GARNL3) (Gallus gallus (Chicken)).